Reading from the N-terminus, the 143-residue chain is Large ribosomal subunit protein uL11 (143 aa).

This sequence belongs to the universal ribosomal protein uL11 family. Part of the ribosomal stalk of the 50S ribosomal subunit. Interacts with L10 and the large rRNA to form the base of the stalk. L10 forms an elongated spine to which L12 dimers bind in a sequential fashion forming a multimeric L10(L12)X complex. In terms of processing, one or more lysine residues are methylated.

Forms part of the ribosomal stalk which helps the ribosome interact with GTP-bound translation factors. This Pseudomonas fluorescens (strain Pf0-1) protein is Large ribosomal subunit protein uL11.